The primary structure comprises 244 residues: tRNA pseudouridine synthase A (244 aa).

Residue Asp-52 is the Nucleophile of the active site. Tyr-110 provides a ligand contact to substrate.

This sequence belongs to the tRNA pseudouridine synthase TruA family. Homodimer.

It carries out the reaction uridine(38/39/40) in tRNA = pseudouridine(38/39/40) in tRNA. Functionally, formation of pseudouridine at positions 38, 39 and 40 in the anticodon stem and loop of transfer RNAs. This chain is tRNA pseudouridine synthase A, found in Pelobacter propionicus (strain DSM 2379 / NBRC 103807 / OttBd1).